The sequence spans 283 residues: Putative replication protein XF_b0001 (283 aa).

The protein is Putative replication protein XF_b0001 of Xylella fastidiosa (strain 9a5c).